The primary structure comprises 149 residues: Cytochrome c-type biogenesis protein CcmE (149 aa).

Over 1-7 the chain is Cytoplasmic; it reads MKPRHKK. Residues 8-28 form a helical; Signal-anchor for type II membrane protein membrane-spanning segment; it reads MAVIALSVSALTVAVVLVLNA. Residues 29 to 149 lie on the Periplasmic side of the membrane; that stretch reads FQSNLVFFFS…AKAQKTSLAQ (121 aa). Heme contacts are provided by His123 and Tyr127.

This sequence belongs to the CcmE/CycJ family.

It localises to the cell inner membrane. Its function is as follows. Heme chaperone required for the biogenesis of c-type cytochromes. Transiently binds heme delivered by CcmC and transfers the heme to apo-cytochromes in a process facilitated by CcmF and CcmH. The chain is Cytochrome c-type biogenesis protein CcmE from Nitrosomonas europaea (strain ATCC 19718 / CIP 103999 / KCTC 2705 / NBRC 14298).